The sequence spans 324 residues: Type II restriction enzyme AplI (324 aa).

Belongs to the BsuBI/PstI type II restriction endonuclease family. Mg(2+) serves as cofactor.

The enzyme catalyses Endonucleolytic cleavage of DNA to give specific double-stranded fragments with terminal 5'-phosphates.. Activated by K(+) and Na(+) ions, whereas NH(4)(+) ions appear to inhibit endonuclease activity. Functionally, a P subtype restriction enzyme that recognizes the double-stranded sequence 5'-CTGCAG-3' and cleaves after A-5. The protein is Type II restriction enzyme AplI (aplIR) of Arthrospira platensis (strain NIES-39 / UTEX 3086 / IAM M-135) (Spirulina platensis).